The following is a 112-amino-acid chain: Large ribosomal subunit protein eL31 (112 aa).

Belongs to the eukaryotic ribosomal protein eL31 family. Component of the large ribosomal subunit. Mature ribosomes consist of a small (40S) and a large (60S) subunit. The 40S subunit contains about 32 different proteins and 1 molecule of RNA (18S). The 60S subunit contains 45 different proteins and 3 molecules of RNA (25S, 5.8S and 5S).

It is found in the cytoplasm. Its function is as follows. Component of the ribosome, a large ribonucleoprotein complex responsible for the synthesis of proteins in the cell. The small ribosomal subunit (SSU) binds messenger RNAs (mRNAs) and translates the encoded message by selecting cognate aminoacyl-transfer RNA (tRNA) molecules. The large subunit (LSU) contains the ribosomal catalytic site termed the peptidyl transferase center (PTC), which catalyzes the formation of peptide bonds, thereby polymerizing the amino acids delivered by tRNAs into a polypeptide chain. The nascent polypeptides leave the ribosome through a tunnel in the LSU and interact with protein factors that function in enzymatic processing, targeting, and the membrane insertion of nascent chains at the exit of the ribosomal tunnel. This is Large ribosomal subunit protein eL31 from Candida albicans (strain SC5314 / ATCC MYA-2876) (Yeast).